A 57-amino-acid chain; its full sequence is Ribulose bisphosphate carboxylase large chain (57 aa).

Residues 1–2 constitute a propeptide that is removed on maturation; it reads MS. Position 3 is an N-acetylproline (P3). K14 is modified (N6,N6,N6-trimethyllysine).

Belongs to the RuBisCO large chain family. Type I subfamily. Heterohexadecamer of 8 large chains and 8 small chains.

The protein resides in the plastid. Its subcellular location is the chloroplast. It catalyses the reaction 2 (2R)-3-phosphoglycerate + 2 H(+) = D-ribulose 1,5-bisphosphate + CO2 + H2O. The enzyme catalyses D-ribulose 1,5-bisphosphate + O2 = 2-phosphoglycolate + (2R)-3-phosphoglycerate + 2 H(+). Its function is as follows. RuBisCO catalyzes two reactions: the carboxylation of D-ribulose 1,5-bisphosphate, the primary event in carbon dioxide fixation, as well as the oxidative fragmentation of the pentose substrate in the photorespiration process. Both reactions occur simultaneously and in competition at the same active site. This is Ribulose bisphosphate carboxylase large chain (rbcL) from Camellia sinensis (Tea plant).